Reading from the N-terminus, the 608-residue chain is MSTNSTRTPLDHIRNFSIVAHIDHGKSTLADRLIQSTGGLAERDMSEQVLDSMDIERERGITIKAQTVRLHYKANNGETYVLNLIDTPGHVDFAYEVSRSLSACEGSLLVVDASQGVEAQTLANVYQAIDNNHELVTVLNKIDLPAAEPERIKEQIEEVIGIDASDAVMISAKTGLGIPDVLEAIVNRLPPPKSDVGENGPLKALLVDSWYDTYLGVMVLVRVIDGVLTKGQQIRMMGSGAKYGVERVGVLTPKMVNVDSLGPGEIGFITASIKEVADTRVGDTITDDKRPTAQALPGFKPAQPVVFCGLFPVDAADFEDLRAAVGKLRLNDASFSFEMESSAALGFGFRCGFLGLLHLEIIQERLEREFNLDLVATAPSVVYEMTLTDGTEKELHNPADMPDVVKIKEIREPWIKATILTPDEYLGGILKLCQDRRGLQTELTYVGNRAMITYELPLNEVVFDFYDRLKSISKGYASFDYNIIDYREGDLVKMSILVNGDPVDALSMLVHRSAADRRGRGMCEKLKELIPPHMFQIPIQAAIGGKVIARETVRALRKDVTAKCYGGDATRKRKLLDKQKEGKKRMRQFGKVEIPQEAFIAALKMNDE.

The tr-type G domain occupies 11 to 193 (DHIRNFSIVA…AIVNRLPPPK (183 aa)). GTP-binding positions include 23–28 (DHGKST) and 140–143 (NKID).

Belongs to the TRAFAC class translation factor GTPase superfamily. Classic translation factor GTPase family. LepA subfamily.

It is found in the cell inner membrane. The enzyme catalyses GTP + H2O = GDP + phosphate + H(+). Functionally, required for accurate and efficient protein synthesis under certain stress conditions. May act as a fidelity factor of the translation reaction, by catalyzing a one-codon backward translocation of tRNAs on improperly translocated ribosomes. Back-translocation proceeds from a post-translocation (POST) complex to a pre-translocation (PRE) complex, thus giving elongation factor G a second chance to translocate the tRNAs correctly. Binds to ribosomes in a GTP-dependent manner. This is Elongation factor 4 from Agrobacterium fabrum (strain C58 / ATCC 33970) (Agrobacterium tumefaciens (strain C58)).